A 256-amino-acid polypeptide reads, in one-letter code: MLIKSEGIVLRTTDYGETNKIVTLLTREHGKIGVMARGAKKSNSRLSAISQPFLYGTFLIQSSTGLGTLQQGEMIESMRTIREDLFLTAYAAYMTELLDKGTEEKKPNPYLFELLLQSLRHLNEGTDADIILFIVEVKMLSVMGMKPELDQCVHCGQKEGQFHFSIRDNGFICQNCFSKDPYKLPLSPAAARLLRLFHYFDLSRLGQVDVKPQTKQEIRQVLDHYYDEYSGLYLKSKKFMNQMESMKKLMGGENKS.

The protein belongs to the RecO family.

Functionally, involved in DNA repair and RecF pathway recombination. The polypeptide is DNA repair protein RecO (Bacillus pumilus (strain SAFR-032)).